A 1606-amino-acid polypeptide reads, in one-letter code: Fatty acid synthase apf5 (1606 aa).

Positions 142–218 (VPVSAILISL…ETLSTSHDGQ (77 aa)) constitute a Carrier domain. S177 is subject to O-(pantetheine 4'-phosphoryl)serine. The region spanning 996 to 1539 (KESLIEVALQ…QKGGQALLVH (544 aa)) is the Ketosynthase family 3 (KS3) domain. Catalysis depends on for beta-ketoacyl synthase activity residues C1182, H1424, and H1465.

It belongs to the thiolase-like superfamily. Fungal fatty acid synthetase subunit alpha family.

The catalysed reaction is a fatty acyl-[ACP] + malonyl-[ACP] + H(+) = a 3-oxoacyl-[ACP] + holo-[ACP] + CO2. Its pathway is secondary metabolite biosynthesis. In terms of biological role, fatty acid synthase; part of the gene cluster that mediates the biosynthesis of the cyclic tetrapeptide apicidin F (APF). The non-ribosomal peptide synthetase apf1 incorporates four different amino acids to produce apicidin F: L-phenylalanine, D-pipecolic acid (D-pip), N-methoxy-L-tryptophan and L-2-aminooctanedioic acid. L-Phenylalanine is the only proteinogenic amino acid directly used by apf1. The 3 other apf1 substrates are non-proteinogenic and have to be modified by other enzymes of the cluster. Lysine is converted to delta-1-pyrroline-5-carboxylate (P5C) which is reduced to L-pipecolic acid (L-pip) by apf3. L-pip is epimerized to D-pip, probably by apf1 activity, prior to incorporation. L-Tryptophan is N-oxidyzed by one of the cytochrome P450 monooxygenases (apf7 or apf8), and further methylated at the hydroxy group by the O-methyltransferase apf6 to yield N-methoxy-L-tryptophan. The synthesis of the fourth apf1 substrate is more complex. The fatty acid synthase apf5 is involved in the synthesis of the octanoic acid backbone of L-2-aminooctanedioic acid by fixing one acetyl-CoA unit and three malonyl-CoA units. Then one of the cytochrome P450 monooxygenases (apf7 or apf8) may oxidize this backbone to 2-oxooctanoic acid. The aminotransferase apf4 is predicted to catalyze the exchange of the keto group with an amino group. The next step would be the oxidation of 2-aminooctanoic acid by one of the cytochrome P450 monooxygenases (apf7 or apf8). The last step is the oxidation of 2-amino-8-hydroxyoctanoic acid to 2-aminooctanedioic acid is catalyzed by the FAD-dependent monooxygenase apf9. This is Fatty acid synthase apf5 from Gibberella fujikuroi (strain CBS 195.34 / IMI 58289 / NRRL A-6831) (Bakanae and foot rot disease fungus).